Reading from the N-terminus, the 417-residue chain is XO lethal protein 1 (417 aa).

Residues 373–417 (VSPGETSSEGISDEHHYEEYDEDDIMEEEEAPSARQDDTYDEDEE) are disordered. Acidic residues predominate over residues 391–403 (EYDEDDIMEEEEA).

Belongs to the GHMP kinase family. Xol-1 subfamily.

Its subcellular location is the nucleus. Its function is as follows. Sex-determining factor that is required for sexual differentiation and X chromosome dosage compensation to promote male development. High expression during gastrulation triggers male development, while low expression at that time triggers hermaphrodite development. Although related to GHMP kinase, its mode of action remains unclear. The sequence is that of XO lethal protein 1 from Caenorhabditis elegans.